We begin with the raw amino-acid sequence, 150 residues long: Thyroid hormone-inducible hepatic protein (150 aa).

A disordered region spans residues K83 to D105. S90 is subject to Phosphoserine. Acidic residues predominate over residues S90 to D105.

This sequence belongs to the SPOT14 family. Homodimer. Heterodimer with MID1IP1. Interacts with THRB and PLAGL1. As to expression, highly expressed in liver, lactating mammary gland, epididymal, retroperitoneal and brown fat. Mainly expressed in tissues that synthesize triglycerides.

It is found in the nucleus. It localises to the cytoplasm. Its function is as follows. Plays a role in the regulation of lipogenesis, especially in lactating mammary gland. Important for the biosynthesis of triglycerides with medium-length fatty acid chains. May modulate lipogenesis by interacting with MID1IP1 and preventing its interaction with ACACA. May function as transcriptional coactivator. May modulate the transcription factor activity of THRB. This Rattus norvegicus (Rat) protein is Thyroid hormone-inducible hepatic protein (Thrsp).